The chain runs to 143 residues: MRVLVQRVSSAAVTVEGAVVGALRPDSQGLLALVGVTHSDDRDKARRLAEKLWKLRILADERSASDVGAPILVVSQFTLYADTAKGRRPSWNAAAPAAIAEPLVTEFAAALQGLGADVQTGVFGANMQVELVNDGPVTVLLEL.

The Gly-cisPro motif, important for rejection of L-amino acids signature appears at Gly135–Pro136.

Belongs to the DTD family. In terms of assembly, homodimer.

The protein resides in the cytoplasm. The enzyme catalyses glycyl-tRNA(Ala) + H2O = tRNA(Ala) + glycine + H(+). It catalyses the reaction a D-aminoacyl-tRNA + H2O = a tRNA + a D-alpha-amino acid + H(+). An aminoacyl-tRNA editing enzyme that deacylates mischarged D-aminoacyl-tRNAs. Also deacylates mischarged glycyl-tRNA(Ala), protecting cells against glycine mischarging by AlaRS. Acts via tRNA-based rather than protein-based catalysis; rejects L-amino acids rather than detecting D-amino acids in the active site. By recycling D-aminoacyl-tRNA to D-amino acids and free tRNA molecules, this enzyme counteracts the toxicity associated with the formation of D-aminoacyl-tRNA entities in vivo and helps enforce protein L-homochirality. The protein is D-aminoacyl-tRNA deacylase of Mycolicibacterium paratuberculosis (strain ATCC BAA-968 / K-10) (Mycobacterium paratuberculosis).